Consider the following 61-residue polypeptide: Small ribosomal subunit protein uS14 (61 aa).

Cys-24, Cys-27, Cys-40, and Cys-43 together coordinate Zn(2+).

It belongs to the universal ribosomal protein uS14 family. Zinc-binding uS14 subfamily. Part of the 30S ribosomal subunit. Contacts proteins S3 and S10. It depends on Zn(2+) as a cofactor.

In terms of biological role, binds 16S rRNA, required for the assembly of 30S particles and may also be responsible for determining the conformation of the 16S rRNA at the A site. The chain is Small ribosomal subunit protein uS14 from Geotalea uraniireducens (strain Rf4) (Geobacter uraniireducens).